The primary structure comprises 832 residues: WD repeat-containing protein 75 (832 aa).

13 WD repeats span residues 4–43 (QCQI…KVYS), 47–86 (EECI…KLWD), 90–131 (GILI…QLVS), 145–184 (KEIS…YYFK), 193–230 (LKAT…RLWR), 236–275 (KEYT…VQWP), 278–317 (SEEK…SIID), 323–361 (SGII…QFYS), 375–424 (QQEF…KLWE), 431–477 (SFVL…KVWM), 490–528 (SWLC…TVWE), 532–572 (WDLK…CCWN), and 577–614 (ALEW…FLFQ). A disordered region spans residues 764 to 798 (SQSTEESKEDEEMKSEHSEADSSDETEEMESQKRF).

As to quaternary structure, component of the proposed t-UTP subcomplex of the ribosomal small subunit (SSU) processome. SSU processome is composed of more than 70 proteins and the RNA chaperone small nucleolar RNA (snoRNA) U3.

Its subcellular location is the nucleus. The protein resides in the nucleolus. Ribosome biogenesis factor. Part of the small subunit (SSU) processome, first precursor of the small eukaryotic ribosomal subunit. During the assembly of the SSU processome in the nucleolus, many ribosome biogenesis factors, an RNA chaperone and ribosomal proteins associate with the nascent pre-rRNA and work in concert to generate RNA folding, modifications, rearrangements and cleavage as well as targeted degradation of pre-ribosomal RNA by the RNA exosome. Involved in nucleolar processing of pre-18S ribosomal RNA. Required for optimal pre-ribosomal RNA transcription by RNA polymerase I. The protein is WD repeat-containing protein 75 (wdr75) of Xenopus laevis (African clawed frog).